A 420-amino-acid chain; its full sequence is ATP phosphoribosyltransferase regulatory subunit (420 aa).

The protein belongs to the class-II aminoacyl-tRNA synthetase family. HisZ subfamily. In terms of assembly, heteromultimer composed of HisG and HisZ subunits.

Its subcellular location is the cytoplasm. Its pathway is amino-acid biosynthesis; L-histidine biosynthesis; L-histidine from 5-phospho-alpha-D-ribose 1-diphosphate: step 1/9. Required for the first step of histidine biosynthesis. May allow the feedback regulation of ATP phosphoribosyltransferase activity by histidine. This chain is ATP phosphoribosyltransferase regulatory subunit, found in Bacillus cereus (strain G9842).